The chain runs to 380 residues: Adaptive-response sensory kinase SasA (380 aa).

The segment at 20–101 is kaiB-like domain, interacts with KaiC; the sequence is LLFVANRPGD…QKVDYWWPRW (82 aa). Residues 157-380 form the Histidine kinase domain; it reads LLAHELRNPL…CFHFTLPVYS (224 aa). His160 carries the post-translational modification Phosphohistidine; by autocatalysis.

As to quaternary structure, homotrimer with a small amount of possible homohexamer; a protein fragment of 109-380 is also a homotrimer. Interacts with KaiC, probably as 1 SasA trimer:1 KaiC homohexamer; unphosphorylated SasA has the highest affinity. Homodimer. Binds to the B-loop in the CI domain of KaiC; SasA and KaiB(fs) compete to bind to the CI domain. Binds preferentially to doubly phosphorylated KaiC. Autophosphorylates, probably on His-160.

The enzyme catalyses ATP + protein L-histidine = ADP + protein N-phospho-L-histidine.. In terms of biological role, member of the two-component regulatory system SasA/RpaA involved in genome-wide circadian gene expression. One of several clock output pathways. Participates in the Kai clock protein complex, the main circadian regulator in cyanobacteria, via its interaction with KaiC. KaiC enhances the autophosphorylation activity of SasA, which then transfers its phosphate group to RpaA to activate it. In addition to its output function, recruits fold-shifted KaiB (KaiB(fs)) to KaiC to cooperatively form the KaiB(6):KaiC(6) complex (independent of SasA kinase activity). Required for robustness of the circadian rhythm of gene expression and is involved in clock output, also required for adaptation to light/dark cycles. In Thermosynechococcus vestitus (strain NIES-2133 / IAM M-273 / BP-1), this protein is Adaptive-response sensory kinase SasA.